A 312-amino-acid chain; its full sequence is Taste receptor type 2 member 140 (312 aa).

Residues 1-9 (MKVTVECAL) lie on the Extracellular side of the membrane. A helical transmembrane segment spans residues 10–30 (LITLIVEIIIGCLGNGFIAVV). Topologically, residues 31 to 46 (NIMDWTKRRRFSLVDQ) are cytoplasmic. Residues 47–67 (ILTALAISRLAFVWSLLTVLV) form a helical membrane-spanning segment. The Extracellular segment spans residues 68-87 (ISELHSSLLITRKMLRIINN). The helical transmembrane segment at 88–108 (FWTVTNHFSIWLATCLSIFYF) threads the bilayer. Residues 109 to 133 (LKIANFSNSIFLSLRWRVKTVVSLT) are Cytoplasmic-facing. Residues 134–154 (LLVSLLLLLVNVIIINTCIVI) traverse the membrane as a helical segment. Topologically, residues 155–185 (SVEGYKVNMSYSSHFNNNPQISRIPLFTNTM) are extracellular. The N-linked (GlcNAc...) asparagine glycan is linked to N162. Residues 186–206 (FTFIPFTVTLTIFLLLIFSLW) form a helical membrane-spanning segment. At 207–229 (RHLKKMQHRAKGPRDPSTTAHIK) the chain is on the cytoplasmic side. The helical transmembrane segment at 230-250 (ALQMVVTFLFLYTIFFLALVM) threads the bilayer. Residues 251-264 (QAWNNEIQSKTVFN) are Extracellular-facing. A helical transmembrane segment spans residues 265–285 (LVFESIALAFPSGHSCVLILG). Topologically, residues 286-312 (NSKLRQAFLTIIWWLRSSFNAAELSSP) are cytoplasmic.

Belongs to the G-protein coupled receptor T2R family.

It localises to the membrane. Functionally, putative taste receptor which may play a role in the perception of bitterness. The protein is Taste receptor type 2 member 140 of Rattus norvegicus (Rat).